The chain runs to 277 residues: Phosphonoacetaldehyde hydrolase-like protein (277 aa).

This sequence belongs to the HAD-like hydrolase superfamily. PhnX family.

In Syntrophobacter fumaroxidans (strain DSM 10017 / MPOB), this protein is Phosphonoacetaldehyde hydrolase-like protein (phnX2).